The following is a 140-amino-acid chain: Protein YwqH (140 aa).

Residues 6–51 (MLADIKSSLNGKISDVEDKIEKLKKAKKDIDTLQEEAITEIKEIVK) adopt a coiled-coil conformation.

This chain is Protein YwqH (ywqH), found in Bacillus subtilis (strain 168).